The following is a 375-amino-acid chain: uncharacterized protein (375 aa).

The segment covering 1–12 (MAGNKKQVKKNT) has biased composition (basic residues). Disordered stretches follow at residues 1–76 (MAGN…EKKS) and 119–274 (KNKN…KEIK). The span at 26 to 39 (DTSNLDTAVQTSAS) shows a compositional bias: polar residues. A compositionally biased stretch (low complexity) spans 129–141 (TATDGTTTTTNIP). Over residues 175–185 (DETHSHKEEPK) the composition is skewed to basic and acidic residues. 2 stretches are compositionally biased toward low complexity: residues 198–212 (SKQQ…SSSS) and 225–241 (PTPT…KSTP). Residues 256-274 (EQPKEKSSPAPVKKEKEIK) are compositionally biased toward basic and acidic residues. The next 2 membrane-spanning stretches (helical) occupy residues 299-319 (VVYK…LVPL) and 327-347 (IYSY…TLFI). Residues 355–375 (ASKEQKSKSGNKKSTTRKVKA) are disordered. A compositionally biased stretch (basic residues) spans 363–375 (SGNKKSTTRKVKA).

It is found in the membrane. This is an uncharacterized protein from Dictyostelium discoideum (Social amoeba).